We begin with the raw amino-acid sequence, 213 residues long: Ras-related protein Rab-25 (213 aa).

S21, G24, K25, T26, N27, S38, H39, T43, and T44 together coordinate GTP. Residue T26 coordinates Mg(2+). Short sequence motifs (switch) lie at residues 35 to 49 (NEFS…GVEF) and 67 to 84 (DTAG…YYRG). Residues T44 and D67 each coordinate Mg(2+). GTP is bound by residues G70, N125, K126, D128, A156, and L157. S-geranylgeranyl cysteine attachment occurs at residues C209 and C210. Cysteine methyl ester is present on C210. Residues 211-213 (ISL) constitute a propeptide, removed in mature form.

It belongs to the small GTPase superfamily. Rab family. Interacts (GTP-bound form) with RAB11FIP1, RAB11FIP2, RAB11FIP3 and RAB11FIP4. Interacts (via the hypervariable C-terminal region) with ITGB1 (via the cytoplasmic region); the interaction is GTP-dependent. Interacts with ITGAV. Associates with the integrin alpha-V/beta-1 heterodimer. Interacts with VPS33B. Mg(2+) serves as cofactor. Expression is restricted to epithelial cells. Expressed in ovarian epithelium (NOE) and breast tissue. Expressed in ovarian cancer; expression is increased relative to NOE cells. Expression in ovarian cancer is stage dependent, with stage III and stage IV showing higher levels than early stage cancers. Expressed in breast cancer; expression is increased relative to normal breast tissue.

It localises to the cell membrane. Its subcellular location is the cytoplasmic vesicle. It is found in the cell projection. The protein resides in the pseudopodium membrane. It catalyses the reaction GTP + H2O = GDP + phosphate + H(+). Its activity is regulated as follows. Regulated by guanine nucleotide exchange factors (GEFs) which promote the exchange of bound GDP for free GTP. Regulated by GTPase activating proteins (GAPs) which increase the GTP hydrolysis activity. Inhibited by GDP dissociation inhibitors (GDIs) which prevent Rab-GDP dissociation. Functionally, the small GTPases Rab are key regulators of intracellular membrane trafficking, from the formation of transport vesicles to their fusion with membranes. Rabs cycle between an inactive GDP-bound form and an active GTP-bound form that is able to recruit to membranes different set of downstream effectors directly responsible for vesicle formation, movement, tethering and fusion. RAB25 regulates epithelial cell differentiation, proliferation and survival, thereby playing key roles in tumorigenesis. Promotes invasive migration of cells in which it functions to localize and maintain integrin alpha-V/beta-1 at the tips of extending pseudopodia. Involved in the regulation of epithelial morphogenesis through the control of CLDN4 expression and localization at tight junctions. May selectively regulate the apical recycling pathway. Together with MYO5B regulates transcytosis. This Homo sapiens (Human) protein is Ras-related protein Rab-25.